Here is a 536-residue protein sequence, read N- to C-terminus: Alpha-1,3-mannosyl-glycoprotein 4-beta-N-acetylglucosaminyltransferase A (536 aa).

The Cytoplasmic segment spans residues 1–6 (MRLRNG). Residues 7–27 (TVATALVFITTFLSLSWYTAW) form a helical; Signal-anchor for type II membrane protein membrane-spanning segment. Positions 28-54 (QNGKEKLMAYQREFHALKERLRIAEHR) form a coiled coil. Residues 28 to 536 (QNGKEKLMAY…EIHIKRNPAD (509 aa)) are Lumenal-facing. N-linked (GlcNAc...) asparagine glycans are attached at residues Asn77 and Asn458.

The protein belongs to the glycosyltransferase 54 family. Requires a divalent metal cation as cofactor. Post-translationally, N-glycosylated.

The protein resides in the golgi apparatus membrane. It is found in the secreted. The enzyme catalyses N(4)-{beta-D-GlcNAc-(1-&gt;2)-alpha-D-Man-(1-&gt;3)-[beta-D-GlcNAc-(1-&gt;2)-alpha-D-Man-(1-&gt;6)]-beta-D-Man-(1-&gt;4)-beta-D-GlcNAc-(1-&gt;4)-beta-D-GlcNAc}-L-asparaginyl-[protein] + UDP-N-acetyl-alpha-D-glucosamine = N(4)-{beta-D-GlcNAc-(1-&gt;2)-[beta-D-GlcNAc-(1-&gt;4)]-alpha-D-Man-(1-&gt;3)-[beta-D-GlcNAc-(1-&gt;2)-alpha-D-Man-(1-&gt;6)]-beta-D-Man-(1-&gt;4)-beta-D-GlcNAc-(1-&gt;4)-beta-D-GlcNAc}-L-asparaginyl-[protein] + UDP + H(+). It catalyses the reaction an N(4)-{beta-D-GlcNAc-(1-&gt;2)-alpha-D-Man-(1-&gt;3)-[alpha-D-Man-(1-&gt;6)]-beta-D-Man-(1-&gt;4)-beta-D-GlcNAc-(1-&gt;4)-beta-D-GlcNAc}-L-asparaginyl-[protein] + UDP-N-acetyl-alpha-D-glucosamine = an N(4)-{beta-D-GlcNAc-(1-&gt;2)-[beta-D-GlcNAc-(1-&gt;4)]-alpha-D-Man-(1-&gt;3)-[alpha-D-Man-(1-&gt;6)]-beta-D-Man-(1-&gt;4)-beta-D-GlcNAc-(1-&gt;4)-beta-D-GlcNAc}-L-asparaginyl-[protein] + UDP + H(+). The catalysed reaction is an N(4)-{beta-D-GlcNAc-(1-&gt;2)-alpha-D-Man-(1-&gt;3)-[beta-D-GlcNAc-(1-&gt;2)-[beta-D-GlcNAc-(1-&gt;6)]-alpha-D-Man-(1-&gt;6)]-beta-D-Man-(1-&gt;4)-beta-D-GlcNAc-(1-&gt;4)-beta-D-GlcNAc}-L-asparaginyl-[protein] + UDP-N-acetyl-alpha-D-glucosamine = an N(4)-{beta-D-GlcNAc-(1-&gt;2)-[beta-D-GlcNAc-(1-&gt;4)]-alpha-D-Man-(1-&gt;3)-[beta-D-GlcNAc-(1-&gt;2)-[beta-D-GlcNAc-(1-&gt;6)]-alpha-D-Man-(1-&gt;6)]-beta-D-Man-(1-&gt;4)-beta-D-GlcNAc-(1-&gt;4)-beta-D-GlcNAc}-L-asparaginyl-[protein] + UDP + H(+). It carries out the reaction an N(4)-{beta-D-GlcNAc-(1-&gt;2)-alpha-D-Man-(1-&gt;3)-[beta-D-GlcNAc-(1-&gt;2)-alpha-D-Man-(1-&gt;6)]-beta-D-Man-(1-&gt;4)-beta-D-GlcNAc-(1-&gt;4)-[alpha-L-Fuc-(1-&gt;6)]-beta-D-GlcNAc}-L-asparaginyl-[protein] + UDP-N-acetyl-alpha-D-glucosamine = N(4)-{beta-D-GlcNAc-(1-&gt;2)-[beta-D-GlcNAc-(1-&gt;4)]-alpha-D-Man-(1-&gt;3)-[beta-D-GlcNAc-(1-&gt;2)-alpha-D-Man-(1-&gt;6)]-beta-D-Man-(1-&gt;4)-beta-D-GlcNAc-(1-&gt;4)-[alpha-L-Fuc-(1-&gt;6)]-beta-D-GlcNAc}-asparaginyl-[protein] + UDP + H(+). The enzyme catalyses an N(4)-{beta-D-GlcNAc-(1-&gt;2)-alpha-D-Man-(1-&gt;3)-[beta-D-Gal-(1-&gt;4)-beta-D-GlcNAc-(1-&gt;2)-alpha-D-Man-(1-&gt;6)]-beta-D-Man-(1-&gt;4)-beta-D-GlcNAc-(1-&gt;4)-beta-D-GlcNAc}-L-asparaginyl-[protein] + UDP-N-acetyl-alpha-D-glucosamine = an N(4)-{beta-D-GlcNAc-(1-&gt;2)-[beta-D-GlcNAc-(1-&gt;4)]-alpha-D-Man-(1-&gt;3)-[beta-D-Gal-(1-&gt;4)-beta-D-GlcNAc-(1-&gt;2)-alpha-D-Man-(1-&gt;6)]-beta-D-Man-(1-&gt;4)-beta-D-GlcNAc-(1-&gt;4)-beta-D-GlcNAc}-L-asparaginyl-[protein] + UDP + H(+). It catalyses the reaction N(4)-{beta-D-GlcNAc-(1-&gt;2)-alpha-D-Man-(1-&gt;3)-[alpha-D-Man-(1-&gt;3)-{alpha-D-Man-(1-&gt;6)}-alpha-D-Man-(1-&gt;6)]-beta-D-Man-(1-&gt;4)-beta-D-GlcNAc-(1-&gt;4)-beta-D-GlcNAc}-asparaginyl-[protein] + UDP-N-acetyl-alpha-D-glucosamine = N(4)-{beta-D-GlcNAc-(1-&gt;2)-[beta-D-GlcNAc-(1-&gt;4)]-alpha-D-Man-(1-&gt;3)-[alpha-D-Man-(1-&gt;3)-{alpha-D-Man-(1-&gt;6)}-alpha-D-Man-(1-&gt;6)]-beta-D-Man-(1-&gt;4)-beta-D-GlcNAc-(1-&gt;4)-beta-D-GlcNAc}-asparaginyl-[protein] + UDP + H(+). The catalysed reaction is N(4)-{beta-D-GlcNAc-(1-&gt;2)-alpha-D-Man-(1-&gt;3)-beta-D-Man-(1-&gt;4)-beta-D-GlcNAc-(1-&gt;4)-beta-D-GlcNAc}-asparaginyl-[protein] + UDP-N-acetyl-alpha-D-glucosamine = N(4)-{beta-D-GlcNAc-(1-&gt;2)-[beta-D-GlcNAc-(1-&gt;4)]-alpha-D-Man-(1-&gt;3)-beta-D-Man-(1-&gt;4)-beta-D-GlcNAc-(1-&gt;4)-beta-D-GlcNAc}-asparaginyl-[protein] + UDP + H(+). It functions in the pathway protein modification; protein glycosylation. Its activity is regulated as follows. Inhibited by UDP. Functionally, glycosyltransferase that catalyze the transfer of GlcNAc from UDP-GlcNAc to the GlcNAcbeta1-2Manalpha1-3 arm of the core structure of N-linked glycans through a beta1-4 linkage and participates in the production of tri- and tetra-antennary N-linked sugar chains. Involved in glucose transport by mediating SLC2A2/GLUT2 glycosylation, thereby controlling cell-surface expression of SLC2A2 in pancreatic beta cells. The protein is Alpha-1,3-mannosyl-glycoprotein 4-beta-N-acetylglucosaminyltransferase A of Xenopus tropicalis (Western clawed frog).